The sequence spans 447 residues: Omega-3 fatty acid desaturase, chloroplastic (447 aa).

The Histidine box-1 motif lies at 167 to 171 (HDCGH). The Histidine box-2 signature appears at 203–207 (HRTHH). Positions 370–374 (HVIHH) match the Histidine box-3 motif.

The protein belongs to the fatty acid desaturase type 1 family.

It is found in the plastid. It localises to the chloroplast membrane. Its pathway is lipid metabolism; polyunsaturated fatty acid biosynthesis. In terms of biological role, chloroplast omega-3 fatty acid desaturase introduces the third double bond in the biosynthesis of 16:3 and 18:3 fatty acids, important constituents of plant membranes. It is thought to use ferredoxin as an electron donor and to act on fatty acids esterified to galactolipids, sulfolipids and phosphatidylglycerol. The polypeptide is Omega-3 fatty acid desaturase, chloroplastic (FAD7) (Sesamum indicum (Oriental sesame)).